Here is a 471-residue protein sequence, read N- to C-terminus: N-succinylglutamate 5-semialdehyde dehydrogenase (471 aa).

Residue 207–212 (GSAHAG) participates in NAD(+) binding. Catalysis depends on residues Glu-230 and Cys-264.

It belongs to the aldehyde dehydrogenase family. AstD subfamily.

The catalysed reaction is N-succinyl-L-glutamate 5-semialdehyde + NAD(+) + H2O = N-succinyl-L-glutamate + NADH + 2 H(+). Its pathway is amino-acid degradation; L-arginine degradation via AST pathway; L-glutamate and succinate from L-arginine: step 4/5. Functionally, catalyzes the NAD-dependent reduction of succinylglutamate semialdehyde into succinylglutamate. The protein is N-succinylglutamate 5-semialdehyde dehydrogenase of Novosphingobium aromaticivorans (strain ATCC 700278 / DSM 12444 / CCUG 56034 / CIP 105152 / NBRC 16084 / F199).